Consider the following 288-residue polypeptide: uncharacterized protein (288 aa).

One can recognise an HTH lysR-type domain in the interval 1–59 (MDKLNAISIFCKVIETQSFTLAAKQQNISVAMASKLVSQLEEHLKTRLLQRTTRKIMPT). Residues 19–38 (FTLAAKQQNISVAMASKLVS) constitute a DNA-binding region (H-T-H motif).

It belongs to the LysR transcriptional regulatory family.

This is an uncharacterized protein from Haemophilus influenzae (strain ATCC 51907 / DSM 11121 / KW20 / Rd).